A 1213-amino-acid chain; its full sequence is tRNA wybutosine-synthesizing protein 4 (1213 aa).

Composition is skewed to low complexity over residues 1-13 (METTEEVVAPATT) and 39-52 (ATTTTTTTDGTTPT). Residues 1-76 (METTEEVVAP…DDQVMGTNNS (76 aa)) form a disordered region. The segment covering 53-67 (HNEHASAKDPRKAQD) has biased composition (basic and acidic residues). Residues Arg-117, Gly-148, and Asp-180 each contribute to the S-adenosyl-L-methionine site. Over residues 215-248 (STPAATTTAAATTTTTTELKTTAATASSTSTEAP) the composition is skewed to low complexity. Residues 215–272 (STPAATTTAAATTTTTTELKTTAATASSTSTEAPQKPKKSPKPKDKSKAARAPAPTTA) are disordered. Residues 289–290 (DL) and Glu-318 each bind S-adenosyl-L-methionine. A disordered region spans residues 879-900 (EPRSLPLRNQAPNGAEGNANGS). The 161-residue stretch at 1006-1166 (PTEKPAVLSD…YAAGKDVYGN (161 aa)) folds into the JmjC domain.

This sequence belongs to the methyltransferase superfamily. LCMT family.

The catalysed reaction is 7-[(3S)-3-amino-3-carboxypropyl]wyosine(37) in tRNA(Phe) + S-adenosyl-L-methionine = 7-[(3S)-(3-amino-3-methoxycarbonyl)propyl]wyosine(37) in tRNA(Phe) + S-adenosyl-L-homocysteine. It carries out the reaction 7-[(3S)-(3-amino-3-methoxycarbonyl)propyl]wyosine(37) in tRNA(Phe) + S-adenosyl-L-methionine + CO2 = wybutosine(37) in tRNA(Phe) + S-adenosyl-L-homocysteine + 2 H(+). The protein operates within tRNA modification; wybutosine-tRNA(Phe) biosynthesis. Its function is as follows. Probable S-adenosyl-L-methionine-dependent methyltransferase that acts as a component of the wybutosine biosynthesis pathway. Wybutosine is a hyper modified guanosine with a tricyclic base found at the 3'-position adjacent to the anticodon of eukaryotic phenylalanine tRNA. May methylate the carboxyl group of leucine residues to form alpha-leucine ester residues. This Neurospora crassa (strain ATCC 24698 / 74-OR23-1A / CBS 708.71 / DSM 1257 / FGSC 987) protein is tRNA wybutosine-synthesizing protein 4 (lcm-2).